Reading from the N-terminus, the 206-residue chain is Urease accessory protein UreG (206 aa).

GTP is bound at residue 15-22 (GPVGSGKT).

Belongs to the SIMIBI class G3E GTPase family. UreG subfamily. Homodimer. UreD, UreF and UreG form a complex that acts as a GTP-hydrolysis-dependent molecular chaperone, activating the urease apoprotein by helping to assemble the nickel containing metallocenter of UreC. The UreE protein probably delivers the nickel.

It localises to the cytoplasm. In terms of biological role, facilitates the functional incorporation of the urease nickel metallocenter. This process requires GTP hydrolysis, probably effectuated by UreG. The protein is Urease accessory protein UreG of Ralstonia pickettii (strain 12J).